The primary structure comprises 485 residues: N-succinylglutamate 5-semialdehyde dehydrogenase (485 aa).

220–225 provides a ligand contact to NAD(+); the sequence is GSANTG. Active-site residues include Glu243 and Cys278.

The protein belongs to the aldehyde dehydrogenase family. AstD subfamily.

It catalyses the reaction N-succinyl-L-glutamate 5-semialdehyde + NAD(+) + H2O = N-succinyl-L-glutamate + NADH + 2 H(+). It functions in the pathway amino-acid degradation; L-arginine degradation via AST pathway; L-glutamate and succinate from L-arginine: step 4/5. Catalyzes the NAD-dependent reduction of succinylglutamate semialdehyde into succinylglutamate. This Aliivibrio fischeri (strain ATCC 700601 / ES114) (Vibrio fischeri) protein is N-succinylglutamate 5-semialdehyde dehydrogenase.